The primary structure comprises 545 residues: Ubiquitin carboxyl-terminal hydrolase 17-like protein D (545 aa).

The USP domain maps to 51–348; it reads CGLQNTGNSC…NAYVLFYVQQ (298 aa). C60 acts as the Nucleophile in catalysis. The active-site Proton acceptor is H307. Disordered regions lie at residues 367 to 443 and 521 to 545; these read LDPE…KLGQ and RQEGRRRSKKGKNKNKQGQKLLLVR. Positions 374 to 385 are enriched in basic residues; the sequence is KKSRRKKHKKKS. Over residues 393-404 the composition is skewed to basic and acidic residues; that stretch reads EPSKNREKKATK. The segment covering 524–537 has biased composition (basic residues); sequence GRRRSKKGKNKNKQ.

It belongs to the peptidase C19 family. USP17 subfamily. Detected in T-cell, myeloid, and embryonic stem cell lines.

The protein resides in the nucleus. Its subcellular location is the endoplasmic reticulum. The enzyme catalyses Thiol-dependent hydrolysis of ester, thioester, amide, peptide and isopeptide bonds formed by the C-terminal Gly of ubiquitin (a 76-residue protein attached to proteins as an intracellular targeting signal).. In terms of biological role, deubiquitinating enzyme that removes conjugated ubiquitin from specific proteins to regulate different cellular processes that may include cell proliferation, progression through the cell cycle, apoptosis, cell migration, and the cellular response to viral infection. This is Ubiquitin carboxyl-terminal hydrolase 17-like protein D from Mus musculus (Mouse).